We begin with the raw amino-acid sequence, 410 residues long: Translation initiation factor 2 subunit gamma (410 aa).

Residues 9 to 202 (QAEVNIGMVG…AIEEFIPTPK (194 aa)) form the tr-type G domain. Positions 18-25 (GHVDHGKT) are G1. Residues Asp-21, Thr-25, Gly-46, and Thr-48 each coordinate Mg(2+). GTP is bound at residue 21 to 26 (DHGKTT). The tract at residues 46-50 (GITIK) is G2. Zn(2+)-binding residues include Cys-61, Cys-64, Cys-73, and Cys-76. The tract at residues 90-93 (DAPG) is G3. GTP contacts are provided by residues 145 to 148 (NKIE) and 180 to 182 (SAL). Residues 145-148 (NKIE) are G4. A G5 region spans residues 180-182 (SAL).

This sequence belongs to the TRAFAC class translation factor GTPase superfamily. Classic translation factor GTPase family. EIF2G subfamily. Heterotrimer composed of an alpha, a beta and a gamma chain. It depends on Mg(2+) as a cofactor.

It catalyses the reaction GTP + H2O = GDP + phosphate + H(+). Its function is as follows. eIF-2 functions in the early steps of protein synthesis by forming a ternary complex with GTP and initiator tRNA. This Thermococcus kodakarensis (strain ATCC BAA-918 / JCM 12380 / KOD1) (Pyrococcus kodakaraensis (strain KOD1)) protein is Translation initiation factor 2 subunit gamma.